A 450-amino-acid chain; its full sequence is Putative zinc metalloprotease TP_0600 (450 aa).

H18 lines the Zn(2+) pocket. Residue E19 is part of the active site. Residue H22 coordinates Zn(2+). A helical membrane pass occupies residues 102-124 (IAFAGPLANVLMAVMVLALVSAL). Residues 200 to 278 (TITPDRDAHT…SVVLTVLRSG (79 aa)) enclose the PDZ domain. 2 helical membrane-spanning segments follow: residues 384-406 (VCVS…LILF) and 421-443 (VLYY…AFWN).

This sequence belongs to the peptidase M50B family. Zn(2+) is required as a cofactor.

It is found in the cell inner membrane. The sequence is that of Putative zinc metalloprotease TP_0600 from Treponema pallidum (strain Nichols).